The sequence spans 526 residues: MEKLLIICMLLISVLVATSQSQTDPETFLRCLVREGSNPQVFISDVTYIPSNSSFTTVLRRRIPNLRFDKPTTPKPIAIITPTTWSHISPVLACARLFPVQVRIRSGGHDFEGLSYTSTAPFFLIDLLNFKSVDVNLTEGTAWVDTGATLGELYYKIAEKSNVLGFPAGLCTTLGVGGHISGGGYGTMMRKYGLSVDNVVGSRIIDSNGNTYFDRMSMGEELFWAVRGGGAASFGIVMGYKIRLVPVPEKVTVFSVGKTVGEGAVDLIMKWQNFSHSTDRNLFVKLTLTLVNGAKPGEKKVLATFIGMNLGGFDKTLNVMNRDFPELKLKKTDCTEMRWIDSVLFWAGYPVGTPTSVLLNPTVTKKLFMKRKSDYVKRPVSRTGLGLILKKLVELEKVEMNWNPYGGRMGEIPSSRTPFPHRGGNLFNIEYIIDWSEAGDNVEKKYLALANEFYRFMTPYVSSNPREAFLNYRDIDIGSSGNSTYEEGKIYGAKYFKDNFERLVDIKTKFDEINFWRNEQSIPVRK.

The N-terminal stretch at 1-21 (MEKLLIICMLLISVLVATSQS) is a signal peptide. Cysteine 31 and cysteine 94 are oxidised to a cystine. 4 N-linked (GlcNAc...) asparagine glycosylation sites follow: asparagine 52, asparagine 136, asparagine 273, and asparagine 482. The 176-residue stretch at 72-247 (TTPKPIAIIT…MGYKIRLVPV (176 aa)) folds into the FAD-binding PCMH-type domain. The segment at residues 109 to 171 (HDFEGLSYTS…NVLGFPAGLC (63 aa)) is a cross-link (6-(S-cysteinyl)-8alpha-(pros-histidyl)-FAD (His-Cys)).

Belongs to the oxygen-dependent FAD-linked oxidoreductase family. The cofactor is FAD. In terms of processing, the FAD cofactor is bound via a bicovalent 6-S-cysteinyl, 8alpha-N1-histidyl FAD linkage.

It localises to the secreted. Its subcellular location is the cell wall. This is Berberine bridge enzyme-like 11 from Arabidopsis thaliana (Mouse-ear cress).